A 155-amino-acid polypeptide reads, in one-letter code: Ribonuclease HI (155 aa).

The 142-residue stretch at 1–142 folds into the RNase H type-1 domain; the sequence is MTKQVEIFTD…CDELARAAAE (142 aa). Mg(2+) is bound by residues D10, E48, D70, and D134.

The protein belongs to the RNase H family. Monomer. The cofactor is Mg(2+).

Its subcellular location is the cytoplasm. It carries out the reaction Endonucleolytic cleavage to 5'-phosphomonoester.. Endonuclease that specifically degrades the RNA of RNA-DNA hybrids. In Vibrio vulnificus (strain CMCP6), this protein is Ribonuclease HI.